Here is a 221-residue protein sequence, read N- to C-terminus: UPF0758 protein ECA0145 (221 aa).

Residues 99-221 form the MPN domain; the sequence is AMLNPEATGQ…FVSFAERGWI (123 aa). Zn(2+)-binding residues include H170, H172, and D183. The short motif at 170-183 is the JAMM motif element; it reads HNHPSGKAEPSQAD.

It belongs to the UPF0758 family. YicR subfamily.

This is UPF0758 protein ECA0145 from Pectobacterium atrosepticum (strain SCRI 1043 / ATCC BAA-672) (Erwinia carotovora subsp. atroseptica).